A 402-amino-acid chain; its full sequence is Type II NADH:quinone oxidoreductase (402 aa).

FAD-binding positions include 12–16 (GAGYA), 39–40 (NK), and valine 83. Glutamate 172 is an active-site residue. Residues aspartate 302, 319–320 (AQ), and lysine 379 contribute to the FAD site.

Belongs to the NADH dehydrogenase family. As to quaternary structure, homodimer in solution. Forms homotetramers; dimer of dimers. FAD serves as cofactor.

The protein resides in the cell membrane. It catalyses the reaction a quinone + NADH + H(+) = a quinol + NAD(+). The enzyme catalyses a menaquinone + NADH + H(+) = a menaquinol + NAD(+). The catalysed reaction is a ubiquinone + NADH + H(+) = a ubiquinol + NAD(+). Its activity is regulated as follows. Inhibited by HQNO, a quinone derivative. In terms of biological role, alternative, nonproton pumping NADH:quinone oxidoreductase that delivers electrons to the respiratory chain by oxidation of NADH and reduction of quinones, and contributes to the regeneration of NAD(+). Can use DMN, a menaquinone analog, 2,3-dimethoxy-5,6-dimethyl-benzoquinone (DDB), an ubiquinone analog, or 2,3,5,6-tetramethyl-1,4-benzoquinone (Duroquinone, DQ) a plastoquinone analog as electron acceptors. The protein is Type II NADH:quinone oxidoreductase of Staphylococcus aureus (strain NCTC 8325 / PS 47).